The primary structure comprises 248 residues: 4-hydroxy-tetrahydrodipicolinate reductase (248 aa).

NAD(+) contacts are provided by residues 9–14, 77–79, and 104–107; these read GARGKV, GTT, and APNF. His-134 acts as the Proton donor/acceptor in catalysis. His-135 serves as a coordination point for (S)-2,3,4,5-tetrahydrodipicolinate. The active-site Proton donor is Lys-138. Position 144–145 (144–145) interacts with (S)-2,3,4,5-tetrahydrodipicolinate; it reads GT.

The protein belongs to the DapB family.

It localises to the cytoplasm. It catalyses the reaction (S)-2,3,4,5-tetrahydrodipicolinate + NAD(+) + H2O = (2S,4S)-4-hydroxy-2,3,4,5-tetrahydrodipicolinate + NADH + H(+). The catalysed reaction is (S)-2,3,4,5-tetrahydrodipicolinate + NADP(+) + H2O = (2S,4S)-4-hydroxy-2,3,4,5-tetrahydrodipicolinate + NADPH + H(+). Its pathway is amino-acid biosynthesis; L-lysine biosynthesis via DAP pathway; (S)-tetrahydrodipicolinate from L-aspartate: step 4/4. Its function is as follows. Catalyzes the conversion of 4-hydroxy-tetrahydrodipicolinate (HTPA) to tetrahydrodipicolinate. The polypeptide is 4-hydroxy-tetrahydrodipicolinate reductase (Nocardia farcinica (strain IFM 10152)).